The chain runs to 290 residues: Membrane protein insertase YidC 2 (290 aa).

A signal peptide spans 1–19 (MKKKALLPLFLGIMIFLAG). Cysteine 20 is lipidated: N-palmitoyl cysteine. Residue cysteine 20 is the site of S-diacylglycerol cysteine attachment. 5 helical membrane-spanning segments follow: residues 56–76 (FGLA…PFML), 134–154 (MLGC…YFVL), 176–196 (PDIW…VVSS), 211–231 (MVIS…ALGL), and 232–252 (YWSV…IYYS). Residues 266–290 (YEREHNPSSKKKGKNTQVVSKKNKK) are disordered. A compositionally biased stretch (polar residues) spans 280–290 (NTQVVSKKNKK).

It belongs to the OXA1/ALB3/YidC family. Type 2 subfamily.

The protein resides in the cell membrane. Functionally, required for the insertion and/or proper folding and/or complex formation of integral membrane proteins into the membrane. Involved in integration of membrane proteins that insert both dependently and independently of the Sec translocase complex, as well as at least some lipoproteins. The chain is Membrane protein insertase YidC 2 from Staphylococcus epidermidis (strain ATCC 35984 / DSM 28319 / BCRC 17069 / CCUG 31568 / BM 3577 / RP62A).